The chain runs to 424 residues: Virion nicking-joining enzyme (424 aa).

2 PLD phosphodiesterase domains span residues 110-137 (LGGV…DWRS) and 320-346 (YSRV…TGNY).

Belongs to the orthopoxvirus OPG042 family.

Its subcellular location is the virion. DNA nicking enzyme that cleaves extruded cruciform DNA at its tip. Probably nicks viral hairpins. The polypeptide is Virion nicking-joining enzyme (OPG042) (Homo sapiens (Human)).